A 34-amino-acid polypeptide reads, in one-letter code: Photosystem II reaction center protein M (34 aa).

The helical transmembrane segment at 7 to 27 (GFVASLMFILVPAIFLIVLYI) threads the bilayer.

The protein belongs to the PsbM family. In terms of assembly, PSII is composed of 1 copy each of membrane proteins PsbA, PsbB, PsbC, PsbD, PsbE, PsbF, PsbH, PsbI, PsbJ, PsbK, PsbL, PsbM, PsbT, PsbX, PsbY, PsbZ, Psb30/Ycf12, peripheral proteins PsbO, CyanoQ (PsbQ), PsbU, PsbV and a large number of cofactors. It forms dimeric complexes.

It is found in the cellular thylakoid membrane. Its function is as follows. One of the components of the core complex of photosystem II (PSII). PSII is a light-driven water:plastoquinone oxidoreductase that uses light energy to abstract electrons from H(2)O, generating O(2) and a proton gradient subsequently used for ATP formation. It consists of a core antenna complex that captures photons, and an electron transfer chain that converts photonic excitation into a charge separation. This subunit is found at the monomer-monomer interface. The chain is Photosystem II reaction center protein M from Synechococcus sp. (strain CC9902).